Consider the following 575-residue polypeptide: Dihydroxy-acid dehydratase (575 aa).

[2Fe-2S] cluster is bound at residue C64. D96 provides a ligand contact to Mg(2+). C137 contributes to the [2Fe-2S] cluster binding site. Mg(2+) contacts are provided by D138 and K139. The residue at position 139 (K139) is an N6-carboxylysine. Residue C214 coordinates [2Fe-2S] cluster. E465 serves as a coordination point for Mg(2+). S491 (proton acceptor) is an active-site residue.

The protein belongs to the IlvD/Edd family. As to quaternary structure, homodimer. [2Fe-2S] cluster is required as a cofactor. Requires Mg(2+) as cofactor.

It catalyses the reaction (2R)-2,3-dihydroxy-3-methylbutanoate = 3-methyl-2-oxobutanoate + H2O. The catalysed reaction is (2R,3R)-2,3-dihydroxy-3-methylpentanoate = (S)-3-methyl-2-oxopentanoate + H2O. The protein operates within amino-acid biosynthesis; L-isoleucine biosynthesis; L-isoleucine from 2-oxobutanoate: step 3/4. It participates in amino-acid biosynthesis; L-valine biosynthesis; L-valine from pyruvate: step 3/4. Functionally, functions in the biosynthesis of branched-chain amino acids. Catalyzes the dehydration of (2R,3R)-2,3-dihydroxy-3-methylpentanoate (2,3-dihydroxy-3-methylvalerate) into 2-oxo-3-methylpentanoate (2-oxo-3-methylvalerate) and of (2R)-2,3-dihydroxy-3-methylbutanoate (2,3-dihydroxyisovalerate) into 2-oxo-3-methylbutanoate (2-oxoisovalerate), the penultimate precursor to L-isoleucine and L-valine, respectively. The polypeptide is Dihydroxy-acid dehydratase (Mycobacterium bovis (strain ATCC BAA-935 / AF2122/97)).